We begin with the raw amino-acid sequence, 322 residues long: MTHNKVVIIGSGPAGHTAAIYLARGELKPVMYEGMLANGIAAGGQLTTTTDVENFPGFPDGINGTTLTENFRAQSLRFGTEIITETVSKLDLSSRPFKYWLEGAEEEEPHTADSVILATGASARRLHITGEDTYWQAGISACAVCDGAVPIYRNKPLAVVGGGDSAAEEAQFLTKYGSKVYVLVRRDKLRASPIMAKRLLANPKVEVLWNTVAEEAQGDGKLLNNLRIKNTNTNEVSDLQVNGLFYAIGHIPATKLVAEQIELDEAGYIKTINGTPRTSIPGFFAAGDVQDKVFRQAITSAGSGCQAALLAMHYLEELEDTD.

FAD is bound by residues 11-14 (SGPA), 40-41 (IA), Gln-45, Asn-54, Val-87, and Cys-145. Cys-142 and Cys-145 are disulfide-bonded. Ser-192 carries the phosphoserine modification. Thr-278 is modified (phosphothreonine). Ser-279 carries the post-translational modification Phosphoserine. FAD-binding positions include Asp-288 and 295-297 (RQA).

It belongs to the class-II pyridine nucleotide-disulfide oxidoreductase family. Homodimer. FAD is required as a cofactor.

It is found in the cytoplasm. The enzyme catalyses [thioredoxin]-dithiol + NADP(+) = [thioredoxin]-disulfide + NADPH + H(+). The polypeptide is Thioredoxin reductase (trr1) (Schizosaccharomyces pombe (strain 972 / ATCC 24843) (Fission yeast)).